Reading from the N-terminus, the 345-residue chain is Splicing factor YJU2 (345 aa).

Residues C43, C46, C80, and C83 each contribute to the Zn(2+) site. The interval 205–345 is disordered; sequence KRLRDSDSEE…YSDSDDSSSD (141 aa). Residues 217 to 232 show a composition bias toward basic and acidic residues; it reads ENAKERSKKHIADKPT. Composition is skewed to low complexity over residues 308–317 and 327–337; these read SSITSSSASS and GSSLGLLGAYS.

The protein belongs to the CWC16 family. YJU2 subfamily. In terms of assembly, component of the spliceosome. Present in the activated B complex, the catalytically activated B* complex which catalyzes the branching, the catalytic step 1 C complex catalyzing the exon ligation, and the postcatalytic P complex containing the ligated exons (mRNA) and the excised lariat intron.

It is found in the nucleus. Functionally, part of the spliceosome which catalyzes two sequential transesterification reactions, first the excision of the non-coding intron from pre-mRNA and then the ligation of the coding exons to form the mature mRNA. Plays a role in stabilizing the structure of the spliceosome catalytic core and docking of the branch helix into the active site, producing 5'-exon and lariat intron-3'-intermediates. May protect cells from TP53-dependent apoptosis upon dsDNA break damage through association with PRP19-CD5L complex. The polypeptide is Splicing factor YJU2 (Danio rerio (Zebrafish)).